The chain runs to 365 residues: MGRSPCCDENGLKKGPWTPEEDQKLIDYIHKHGHGSWRALPKLADLNRCGKSCRLRWTNYLRPDIKRGKFSAEEEQTILHLHSILGNKWSAIATHLQGRTDNEIKNFWNTHLKKKLIQMGIDPVTHQPRTDLFASLPQLIALANLKDLIEQTSQFSSMQGEAAQLANLQYLQRMFNSSASLTNNNGNNFSPSSILDIDQHHAMNLLNSMVSWNKDQNPAFDPVLELEANDQNQDLFPLGFIIDQPTQPLQQQKYHLNNSPSELPSQGDPLLDHVPFSLQTPLNSEDHFIDNLVKHPTDHEHEHDDNPSSWVLPSLIDNNPKTVTSSLPHNNPADASSSSSYGGCEAASFYWPDICFDESLMNVIS.

2 HTH myb-type domains span residues 9-61 (ENGL…TNYL) and 62-116 (RPDI…KKKL). DNA-binding regions (H-T-H motif) lie at residues 37–61 (WRALPKLADLNRCGKSCRLRWTNYL) and 89–112 (WSAIATHLQGRTDNEIKNFWNTHL).

In terms of assembly, interacts with FBX5.

Its subcellular location is the nucleus. It localises to the cytoplasm. In terms of biological role, transcription factor that acts as a negative regulator of lateral root (LR) development. Required for normal auxin responses during LR development. May be part of a negative feedback loop stimulated specifically in the endodermis upon LR initiation to ensure that LRs are formed only in the correct place. The protein is Transcription factor MYB93 of Arabidopsis thaliana (Mouse-ear cress).